The chain runs to 342 residues: Tetraacyldisaccharide 4'-kinase (342 aa).

ATP is bound at residue 68–75; the sequence is TVGGTGKT.

This sequence belongs to the LpxK family.

It carries out the reaction a lipid A disaccharide + ATP = a lipid IVA + ADP + H(+). It functions in the pathway glycolipid biosynthesis; lipid IV(A) biosynthesis; lipid IV(A) from (3R)-3-hydroxytetradecanoyl-[acyl-carrier-protein] and UDP-N-acetyl-alpha-D-glucosamine: step 6/6. In terms of biological role, transfers the gamma-phosphate of ATP to the 4'-position of a tetraacyldisaccharide 1-phosphate intermediate (termed DS-1-P) to form tetraacyldisaccharide 1,4'-bis-phosphate (lipid IVA). This chain is Tetraacyldisaccharide 4'-kinase, found in Burkholderia ambifaria (strain ATCC BAA-244 / DSM 16087 / CCUG 44356 / LMG 19182 / AMMD) (Burkholderia cepacia (strain AMMD)).